We begin with the raw amino-acid sequence, 248 residues long: MMTNTAAYQFVTIRDPQTLAASVLAQAEQHALKGSVLVAEEGINLFLAGAAEQIGAFYTWLQADTRFAQMRIKYSESKHQPFARLKVKIKREIISFRRDDASPLQGRAPSVTPAVLRKWLRNGQDDRGRPLVLLDTRNAQEVRYGTFQGALTLPIDKFTDLPGALEPHRAALADATVVSFCTGGIRCEKAALWMQADGMDNVLQLEGGILGYFEEVGGEGYDGRCFVFDERVALDPELNPLVDADRTA.

Residues 127-221 form the Rhodanese domain; the sequence is RGRPLVLLDT…YFEEVGGEGY (95 aa). Residue cysteine 181 is the Cysteine persulfide intermediate of the active site.

Belongs to the TrhO family.

The catalysed reaction is uridine(34) in tRNA + AH2 + O2 = 5-hydroxyuridine(34) in tRNA + A + H2O. Catalyzes oxygen-dependent 5-hydroxyuridine (ho5U) modification at position 34 in tRNAs. The protein is tRNA uridine(34) hydroxylase of Xanthomonas axonopodis pv. citri (strain 306).